A 349-amino-acid chain; its full sequence is MGKVSFGFLGLMLVVVVIGVVECRRFEKETLGGGGGGGLGGGFGGGKGFGGGIGAGGGFGGGAGGGAGGGLGGGAGGGGGIGGGAGGGAGGGLGGGAGGGLGGGHGGGIGGGAGGGAGGGLGGGHGGGIGGGAGGGSGGGLGGGIGGGAGGGAGGGGGLGGGHGGGIGGGAGGGAGGGLGGGHGGGIGGGAGGGSGGGLGGGIGGGAGGGAGGGGGAGGGGGLGGGHGGGFGGGAGGGLGGGAGGGTGGGFGGGAGGGAGGGAGGGFGGGAGGGAGGGFGGGAGGGAGGGAGGGFGGGAGGGHGGGVGGGFGGGSGGGFGGGAGGGAGGGAGGGFGGGGGAGGGFGGGF.

The N-terminal stretch at 1-23 (MGKVSFGFLGLMLVVVVIGVVEC) is a signal peptide.

Its subcellular location is the secreted. The protein localises to the cell wall. Functionally, responsible for plasticity of the cell wall. In Arabidopsis thaliana (Mouse-ear cress), this protein is Glycine-rich cell wall structural protein.